The following is a 64-amino-acid chain: Large ribosomal subunit protein uL30 (64 aa).

The protein belongs to the universal ribosomal protein uL30 family. In terms of assembly, part of the 50S ribosomal subunit.

The protein is Large ribosomal subunit protein uL30 of Desulforudis audaxviator (strain MP104C).